A 477-amino-acid chain; its full sequence is Transmembrane and coiled-coil domain protein 3 (477 aa).

Positions 1 to 24 (MPGSDTALTVDRTYSDPGRHHRCK) are disordered. Ser46 is modified (phosphoserine). Coiled-coil stretches lie at residues 63-83 (KVKLNADSLRQKILKVTEQIK) and 112-149 (KQVFEKKNQKSAHSIAQLQKKLEQYHRKLREIEQNGVT). Residues 234–280 (ASPRAYGGSATIVNKPKYGSDDECSSGTSGSADSNGNQSFGAGGTST) are disordered. Ser253 carries the phosphoserine modification. Residues 258–280 (SSGTSGSADSNGNQSFGAGGTST) show a composition bias toward polar residues. A coiled-coil region spans residues 284 to 398 (QGKIAKIMEE…KLELHQQEQQ (115 aa)). 2 consecutive transmembrane segments (helical) span residues 409–429 (VLLGKCINVVLAFMTVILVCV) and 450–470 (FFAVTLLAIFCKNWDHILCAI).

The protein belongs to the TEX28 family. As to quaternary structure, may form homodimers and heterodimers with TMCC2 or TMCC3 via the coiled-coil domains. Interacts with ribosomal proteins RPL4 and RPS6.

The protein localises to the endoplasmic reticulum membrane. The sequence is that of Transmembrane and coiled-coil domain protein 3 from Mus musculus (Mouse).